A 199-amino-acid chain; its full sequence is Hematopoietic prostaglandin D synthase (199 aa).

Residues 2 to 79 (PNYKLLYFNM…YLTKNTDLAG (78 aa)) form the GST N-terminal domain. Residues Y8, R14, W39, 49–51 (GKI), and 63–64 (QS) each bind glutathione. The region spanning 81-199 (TALEQCQADA…WILKRPQTKL (119 aa)) is the GST C-terminal domain.

This sequence belongs to the GST superfamily. Sigma family. As to quaternary structure, homodimer. It depends on glutathione as a cofactor. In terms of tissue distribution, expressed in skin and oviduct.

It localises to the cytoplasm. The catalysed reaction is prostaglandin H2 = prostaglandin D2. It carries out the reaction RX + glutathione = an S-substituted glutathione + a halide anion + H(+). The enzyme catalyses 2-glyceryl-prostaglandin H2 = 2-glyceryl-prostaglandin D2. In terms of biological role, bifunctional enzyme which catalyzes both the conversion of PGH2 to PGD2, a prostaglandin involved in smooth muscle contraction/relaxation and a potent inhibitor of platelet aggregation, and the conjugation of glutathione with a wide range of aryl halides and organic isothiocyanates. Also exhibits low glutathione-peroxidase activity. This is Hematopoietic prostaglandin D synthase from Mus musculus (Mouse).